A 66-amino-acid polypeptide reads, in one-letter code: Large ribosomal subunit protein bL35 (66 aa).

Residues 20–40 are disordered; the sequence is GKIKSTQSAKRHGMTKRSKRS. A compositionally biased stretch (basic residues) spans 28–40; sequence AKRHGMTKRSKRS.

The protein belongs to the bacterial ribosomal protein bL35 family.

The chain is Large ribosomal subunit protein bL35 from Ehrlichia chaffeensis (strain ATCC CRL-10679 / Arkansas).